A 1333-amino-acid polypeptide reads, in one-letter code: NPC1-like intracellular cholesterol transporter 1 (1333 aa).

The N-terminal stretch at 1-20 (MAAAWQGWLLWALLLNSAQG) is a signal peptide. Over 21–284 (ELYTPTHKAG…SFYMGRMPGW (264 aa)) the chain is Extracellular. Cystine bridges form between cysteine 32–cysteine 90, cysteine 38–cysteine 56, cysteine 77–cysteine 125, cysteine 91–cysteine 129, cysteine 113–cysteine 254, cysteine 116–cysteine 172, cysteine 189–cysteine 197, cysteine 243–cysteine 259, and cysteine 256–cysteine 263. Residues 285 to 305 (LALIIIFTAVFVLLSVVLVYL) form a helical membrane-spanning segment. The Cytoplasmic portion of the chain corresponds to 306 to 352 (RVASNRNKNKTAGSQEAPNLPRKRRFSPHTVLGRFFESWGTRVASWP). The helical transmembrane segment at 353–373 (LTVLALSFIVVIALSVGLTFI) threads the bilayer. The Extracellular portion of the chain corresponds to 374-632 (ELTTDPVELW…DEINRTTIQD (259 aa)). 2 disulfides stabilise this stretch: cysteine 471-cysteine 485 and cysteine 525-cysteine 542. The region spanning 632–797 (DLPVFAISYL…MTAFVALLSL (166 aa)) is the SSD domain. Residues 633-653 (LPVFAISYLIVFLYISLALGS) form a helical membrane-spanning segment. The Cytoplasmic portion of the chain corresponds to 654–665 (YSRWSRVAVDSK). The chain crosses the membrane as a helical span at residues 666–686 (ATLGLGGVAVVLGAVVAAMGF). At 687 to 696 (YSYLGVPSSL) the chain is on the extracellular side. Residues 697–717 (VIIQVVPFLVLAVGADNIFIF) form a helical membrane-spanning segment. The Cytoplasmic segment spans residues 718–742 (VLEYQRLPRMPGEQREAHIGRTLGS). A helical transmembrane segment spans residues 743–763 (VAPSMLLCSLSEAICFFLGAL). Residues 764–776 (TSMPAVRTFALTS) are Extracellular-facing. The helical transmembrane segment at 777–797 (GLAIIFDFLLQMTAFVALLSL) threads the bilayer. Residues 798-846 (DSKRQEASRPDVVCCFSSRNLPPPKQKEGLLLCFFRKIYTPFLLHRFIR) lie on the Cytoplasmic side of the membrane. A helical transmembrane segment spans residues 847–867 (PVVLLLFLVLFGANLYLMCNI). At 868 to 1113 (SVGLDQDLAL…QQYLTVLPEG (246 aa)) the chain is on the extracellular side. Cystine bridges form between cysteine 920/cysteine 925, cysteine 967/cysteine 1025, and cysteine 981/cysteine 990. Residues 1114-1134 (IFTLALCFVPTFVVCYLLLGL) traverse the membrane as a helical segment. The Cytoplasmic segment spans residues 1135 to 1142 (DIRSGILN). Residues 1143-1163 (LLSIIMILVDTIGLMAVWGIS) traverse the membrane as a helical segment. The Extracellular portion of the chain corresponds to 1164 to 1165 (YN). A helical transmembrane segment spans residues 1166-1186 (AVSLINLVTAVGMSVEFVSHI). At 1187-1206 (TRSFAVSTKPTRLERAKDAT) the chain is on the cytoplasmic side. Residues 1207 to 1227 (IFMGSAVFAGVAMTNFPGILI) form a helical membrane-spanning segment. Topologically, residues 1228–1242 (LGFAQAQLIQIFFFR) are extracellular. A helical transmembrane segment spans residues 1243 to 1263 (LNLLITLLGLLHGLVFLPVVL). Residues 1264–1333 (SYLGPDVNQA…SSLPKSDQKF (70 aa)) are Cytoplasmic-facing.

The protein belongs to the patched family. As to quaternary structure, interacts with RAB11A, MYO5B and RAB11FIP2. Interaction with RAB11A, MYO5B and RAB11FIP2 is required for proper transport to the plasma membrane upon cholesterol depletion. Interacts with NPC2. Interacts with LIMA1. Post-translationally, highly glycosylated. Expressed in small intestine, stomach and muscle, along with detectable expression in lung, heart, gall bladder, brain, testis, skin and liver. Expression in liver is extremely low.

The protein localises to the apical cell membrane. Its subcellular location is the cell membrane. It catalyses the reaction cholesterol(in) = cholesterol(out). The enzyme catalyses sitosterol(out) = sitosterol(in). Its function is as follows. Plays a major role in cholesterol homeostasis. Critical for the uptake of cholesterol across the plasma membrane of the intestinal enterocyte. Involved in plant sterol absorption, it transports sitosterol, although at lower rates than cholesterol. May have a function in the transport of multiple lipids and their homeostasis, thereby influencing lipid metabolism regulation. May be involved in caveolin trafficking from the plasma membrane. Acts as a negative regulator of NPC2 and down-regulates its expression and secretion by inhibiting its maturation and accelerating its degradation. In Mus musculus (Mouse), this protein is NPC1-like intracellular cholesterol transporter 1.